A 132-amino-acid polypeptide reads, in one-letter code: Large ribosomal subunit protein uL14 (132 aa).

It belongs to the universal ribosomal protein uL14 family. In terms of assembly, part of the 50S ribosomal subunit. Forms a cluster with proteins L3 and L24e, part of which may contact the 16S rRNA in 2 intersubunit bridges.

Its function is as follows. Binds to 23S rRNA. Forms part of two intersubunit bridges in the 70S ribosome. The polypeptide is Large ribosomal subunit protein uL14 (Methanococcus aeolicus (strain ATCC BAA-1280 / DSM 17508 / OCM 812 / Nankai-3)).